We begin with the raw amino-acid sequence, 306 residues long: Glutathione transport system permease protein GsiC (306 aa).

Residues 1 to 8 (MLNYVIKR) are Cytoplasmic-facing. Residues 9–29 (LLGLIPTLFIVSVLVFLFVHM) form a helical membrane-spanning segment. The Periplasmic portion of the chain corresponds to 30–102 (LPGDPARLIA…SRFMPTLWLT (73 aa)). An ABC transmembrane type-1 domain is found at 95–292 (FMPTLWLTIT…LEFILINLVV (198 aa)). A helical transmembrane segment spans residues 103–123 (ITSMVWAVIFGMAAGIIAAVW). At 124–134 (RNRWPDRLSMT) the chain is on the cytoplasmic side. A helical membrane pass occupies residues 135–155 (IAVSGISFPAFALGMFLIQVF). Residues 156–168 (SVELGWLPTVGAD) are Periplasmic-facing. A helical transmembrane segment spans residues 169–189 (SWQHYILPSLTLGAAVAAVMA). Residues 190 to 228 (RFTRASFVDVLSEDYMRTARAKGVSETWVVLKHGLRNAM) lie on the Cytoplasmic side of the membrane. A helical transmembrane segment spans residues 229–249 (IPVVTMMGLQFGFLLGGSIVV). Topologically, residues 250 to 277 (EKVFNWPGLGRLLVDSVEMRDYPVIQAE) are periplasmic. Residues 278-298 (ILLFSLEFILINLVVDVLYAA) traverse the membrane as a helical segment. Over 299–306 (INPAIRYK) the chain is Cytoplasmic.

It belongs to the binding-protein-dependent transport system permease family. The complex is composed of two ATP-binding proteins (GsiA), two transmembrane proteins (GsiC and GsiD) and a solute-binding protein (GsiB).

It localises to the cell inner membrane. Functionally, part of the ABC transporter complex GsiABCD involved in glutathione import. Probably responsible for the translocation of the substrate across the membrane. This Shigella flexneri serotype 5b (strain 8401) protein is Glutathione transport system permease protein GsiC.